A 206-amino-acid polypeptide reads, in one-letter code: Putative NAD(P)H nitroreductase MhqN (206 aa).

FMN is bound by residues 11–13 (RRS), 68–70 (QYK), 157–158 (IG), arginine 193, and arginine 196.

This sequence belongs to the nitroreductase family. As to quaternary structure, homodimer. FMN is required as a cofactor.

It is found in the cytoplasm. Putative nitroreductase that may contribute to the degradation of aromatic compounds. This is Putative NAD(P)H nitroreductase MhqN (mhqN) from Bacillus subtilis (strain 168).